The primary structure comprises 229 residues: CRISPR pre-crRNA endoribonuclease Cas5d (229 aa).

This sequence belongs to the CRISPR-associated protein Cas5 family. Subtype I-C/Dvulg subfamily. Requires Does not require a metal cofactor. as cofactor.

Its function is as follows. CRISPR (clustered regularly interspaced short palindromic repeat) is an adaptive immune system that provides protection against mobile genetic elements (viruses, transposable elements and conjugative plasmids). CRISPR clusters contain spacers, sequences complementary to antecedent mobile elements, and target invading nucleic acids. CRISPR clusters are transcribed and processed into CRISPR RNA (crRNA). This protein is a sequence-specific endonuclease that cleaves pre-crRNA into mature crRNA, possibly by an intramolecular attack of the 2'-hydroxyl group of G26 on the scissile phosphodiester, cutting the precursor 3' to G26 residue yielding 5'-hydroxyl and 2' and/or 3' ends lacking a hydroxyl group (perhaps a 2'/3' cyclic phosphodiester). Requires between 4 and 8 nt downstream of the cleavage site for both binding and cleavage of pre-crRNA. Substitution with dG at this position abolishes cleavage but not RNA binding. Does not cleave pre-crRNA associated with the M.succiniciproducens strain MBEL55E Cas5 protein (AC Q65TW5) CRISPR locus. This Thermus thermophilus (strain ATCC BAA-163 / DSM 7039 / HB27) protein is CRISPR pre-crRNA endoribonuclease Cas5d.